Consider the following 212-residue polypeptide: MKLPMPIAIQTTQPDVSFQSHSVSRSELAASTHPTRLAARLDPELSAATVVQLQKCARLQPRLAELLLGNDMDWNRIGWGPDLLRGHDPRRAALLAGSIWHARSLLKVVSQRDLARLVERIGADAHAFGIRHLAHAIADKLISDPEKLALQIEHDGHACLGAWLNIRPALERNRVLLRLPLGTAAENPAPEHDGASSGLFSLVIAHFEMESP.

The protein is Nodulation protein NolU (nolU) of Sinorhizobium fredii (strain NBRC 101917 / NGR234).